Consider the following 145-residue polypeptide: Cystin-1 (145 aa).

A disordered region spans residues 1–129; sequence MGSGSSRSGR…PEGQSAISYD (129 aa). Gly-2 is lipidated: N-myristoyl glycine. A Ciliary targeting motif motif is present at residues 29 to 33; sequence ASEGG. Ser-116 carries the phosphoserine modification.

Interacts (when myristoylated) with UNC119 and UNC119B; interaction is required for localization to cilium. Expressed primarily in the kidney and liver. Expressed at lower levels in the lung, brain and heart.

The protein localises to the cell projection. It is found in the cilium membrane. It localises to the cytoplasm. The protein resides in the cytoskeleton. Its subcellular location is the cilium axoneme. In Mus musculus (Mouse), this protein is Cystin-1 (Cys1).